A 179-amino-acid chain; its full sequence is Segregation and condensation protein B (179 aa).

The protein belongs to the ScpB family. As to quaternary structure, homodimer. Homodimerization may be required to stabilize the binding of ScpA to the Smc head domains. Component of a cohesin-like complex composed of ScpA, ScpB and the Smc homodimer, in which ScpA and ScpB bind to the head domain of Smc. The presence of the three proteins is required for the association of the complex with DNA.

It is found in the cytoplasm. Its function is as follows. Participates in chromosomal partition during cell division. May act via the formation of a condensin-like complex containing Smc and ScpA that pull DNA away from mid-cell into both cell halves. This Staphylococcus haemolyticus (strain JCSC1435) protein is Segregation and condensation protein B.